Here is a 689-residue protein sequence, read N- to C-terminus: Shutoff protein (689 aa).

Residues 1 to 24 form a disordered region; sequence MSEEPVSGTTVEIEEDTHTPPNSP. Positions 226-289 are binding to host EIF4G; that stretch reads VMNNLLVKRA…SVLVTVVLEC (64 aa). An RRM domain is found at 292-410; the sequence is RLFTSKDMVK…PLYTETSQRL (119 aa). 2 positions are modified to phosphotyrosine; by host: tyrosine 309 and tyrosine 627. A disordered region spans residues 625–689; sequence GQYLDPHTGE…GEPDVRGTTS (65 aa). Residues 645–655 are compositionally biased toward basic and acidic residues; sequence SGHEFQGDGRH. The span at 656–675 shows a compositional bias: basic residues; it reads REPKRGRHFRQRGGPRKPPR. The span at 678–689 shows a compositional bias: basic and acidic residues; that stretch reads AGGEPDVRGTTS.

This sequence belongs to the adenoviridae shutoff protein family. As to quaternary structure, monomer. Interacts with hexon protein; this interaction allows chaperoning and trimerization of hexon proteins. Interacts (via N-terminus) with host initiation factor EIF4G (via C-terminus). Interacts (via RRM domain) with viral mRNAs that contain the tripartite leader; this interaction allows ribosome shunting and expression of viral late mRNAs. Might be cleaved by the viral protease. Post-translationally, phosphorylated. Tyrosine phosphorylation enhances preferential binding to tripartite leader mRNAs and allows ribosome shunting. In terms of processing, methylated. Asymmetric dimethylation by host PRMT1 of the Arg/Gly-rich region may regulate shutoff protein binding to hexon and promote the capsid assembly in the nucleus.

It localises to the host cytoplasm. Functionally, protein that inhibits host translation while promoting late viral translation by ribosome shunting. Blocks host cap-dependent translation by binding to eIF4G, displacing MKNK1 from cap initiation complexes and preventing EIF4E phosphorylation. Binds to the tripartite leader sequence of viral late mRNAs and recruits host eIF4G, PABPC1/poly-A binding protein and 40S ribosomes subunits on viral mRNAs, allowing ribosome shunting and efficient translation of late viral mRNAs even though conventional translation via ribosome scanning from the cap has been shut off in the host cell. During assembly, acts as a chaperone protein that helps hexon proteins assembly into trimers. This chain is Shutoff protein, found in Canis lupus familiaris (Dog).